The chain runs to 441 residues: MSGEKEEASLRMFGAYGEPEERRDVLESSGVSSQPEPQVQQQLGSLLGVPWQPPGPPIQHSPADQETSTVTQQQWHLQGLGRSELQAAGLPDAQPGEAAESSPSFLLGSEVGQPYSSSSPSEEVLSLLRAIPPIPDEVVVRQKRAPQGSWKVGTLFHGKRVYAVAISGSTHHVYTCGSGYIRVWDESALHAGEKAPRAQLDLQHPQDRVVTCKLFPDERSLITGGASQAVTLWDLAPTPQVRAQLTSTGPTCYSLAVSSDAHICLACFHGFVEIWDLQNQILIRKHEVPVYGSRCVDITGNIFWTGGEDTILYSWDLRSYQRLHQHNLQNEILSITHDPGEEWVLAGLRTSDIVFLHTRRNEQFKALMKKYTRHHSLKFASCGSYFVTAIDTRLSGLEAPSLQKLFQIEESSGILCCDVSSDNQYLVMGSSSSATIYQLLY.

2 disordered regions span residues 1–77 and 91–119; these read MSGE…QWHL and PDAQ…SSSS. Over residues 27-49 the composition is skewed to low complexity; the sequence is ESSGVSSQPEPQVQQQLGSLLGV. A compositionally biased stretch (polar residues) spans 62–76; it reads PADQETSTVTQQQWH. A compositionally biased stretch (low complexity) spans 108 to 119; it reads GSEVGQPYSSSS. 5 WD repeats span residues 156-194, 204-243, 247-285, 286-325, and 409-441; these read FHGK…AGEK, HPQD…QVRA, STGP…LIRK, HEVP…RLHQ, and EESS…QLLY.

The protein belongs to the WD repeat Groucho/TLE family.

The polypeptide is Transducin-like enhancer protein 7 (Homo sapiens (Human)).